A 283-amino-acid polypeptide reads, in one-letter code: Large ribosomal subunit protein uL4 (283 aa).

It belongs to the universal ribosomal protein uL4 family. In terms of assembly, part of the 50S ribosomal subunit.

Functionally, one of the primary rRNA binding proteins, this protein initially binds near the 5'-end of the 23S rRNA. It is important during the early stages of 50S assembly. It makes multiple contacts with different domains of the 23S rRNA in the assembled 50S subunit and ribosome. Forms part of the polypeptide exit tunnel. The protein is Large ribosomal subunit protein uL4 of Pyrobaculum aerophilum (strain ATCC 51768 / DSM 7523 / JCM 9630 / CIP 104966 / NBRC 100827 / IM2).